A 417-amino-acid chain; its full sequence is Carbon catabolite repressor protein 4 homolog 4 (417 aa).

The residue at position 2 (phenylalanine 2) is an N-acetylserine. Residue glutamate 143 coordinates Mg(2+).

Belongs to the CCR4/nocturin family. In terms of assembly, component of the CCR4-NOT complex, at least composed of CRR4 and CAF1 proteins. Forms homooligomers. The cofactor is Mg(2+).

Its subcellular location is the nucleus. It localises to the cytoplasm. It carries out the reaction Exonucleolytic cleavage of poly(A) to 5'-AMP.. In terms of biological role, acts as a catalytic component of the CCR4-NOT core complex, which in the nucleus seems to be a general transcription factor, and in the cytoplasm the major mRNA deadenylase involved in mRNA turnover. Transcriptional regulator of circadian rhythms with poly(A)-degrading activity that affects the expression and rhythmicity of the clock core oscillator genes TOC1 and CCA1. Deadenylation may be a mechanism involved in the regulation of the circadian clock. May play a negative role in response against oxidative stress. Possesses magnesium-dependent poly(A)-specific exoribonuclease activity in vitro and is almost inactive with poly(U), poly(C) and poly(G) as substrates. The polypeptide is Carbon catabolite repressor protein 4 homolog 4 (Arabidopsis thaliana (Mouse-ear cress)).